The chain runs to 368 residues: Type 2 DNA topoisomerase 6 subunit A (368 aa).

The region spanning threonine 9–alanine 148 is the Topo IIA-type catalytic domain. The active-site O-(5'-phospho-DNA)-tyrosine intermediate is tyrosine 103. Mg(2+) is bound by residues glutamate 201 and aspartate 253.

This sequence belongs to the TOP6A family. In terms of assembly, homodimer. Heterotetramer of two Top6A and two Top6B chains. Mg(2+) serves as cofactor.

The enzyme catalyses ATP-dependent breakage, passage and rejoining of double-stranded DNA.. Its function is as follows. Relaxes both positive and negative superturns and exhibits a strong decatenase activity. The chain is Type 2 DNA topoisomerase 6 subunit A from Natronomonas pharaonis (strain ATCC 35678 / DSM 2160 / CIP 103997 / JCM 8858 / NBRC 14720 / NCIMB 2260 / Gabara) (Halobacterium pharaonis).